The following is a 572-amino-acid chain: Alpha-1D adrenergic receptor (572 aa).

Residues 1-77 are disordered; sequence MTFRDLLSVS…SAGEPGSAGA (77 aa). Topologically, residues 1–95 are extracellular; that stretch reads MTFRDLLSVS…AVGGLVVSAQ (95 aa). Composition is skewed to gly residues over residues 23–33 and 42–61; these read SSAGGGGGSAG and AVGGVPGGAGGGGGVVGAGS. Residues Asn65 and Asn82 are each glycosylated (N-linked (GlcNAc...) asparagine). A helical membrane pass occupies residues 96 to 121; the sequence is GVGVGVFLAAFILMAVAGNLLVILSV. Topologically, residues 122-133 are cytoplasmic; it reads ACNRHLQTVTNY. The helical transmembrane segment at 134-159 threads the bilayer; the sequence is FIVNLAVADLLLSATVLPFSATMEVL. Over 160–169 the chain is Extracellular; sequence GFWAFGRAFC. Residues 170 to 192 traverse the membrane as a helical segment; that stretch reads DVWAAVDVLCCTASILSLCTISV. Residues 193-213 are Cytoplasmic-facing; sequence DRYVGVRHSLKYPAIMTERKA. A helical membrane pass occupies residues 214-238; that stretch reads AAILALLWVVALVVSVGPLLGWKEP. The Extracellular segment spans residues 239 to 251; sequence VPPDERFCGITEE. The chain crosses the membrane as a helical span at residues 252 to 275; the sequence is AGYAVFSSVCSFYLPMAVIVVMYC. Topologically, residues 276 to 348 are cytoplasmic; sequence RVYVVARSTT…KFSREKKAAK (73 aa). The chain crosses the membrane as a helical span at residues 349–373; it reads TLAIVVGVFVLCWFPFFFVLPLGSL. Topologically, residues 374–380 are extracellular; sequence FPQLKPS. The chain crosses the membrane as a helical span at residues 381 to 405; that stretch reads EGVFKVIFWLGYFNSCVNPLIYPCS. The Cytoplasmic segment spans residues 406–572; it reads SREFKRAFLR…DYSNLRETDI (167 aa). A lipid anchor (S-palmitoyl cysteine) is attached at Cys419. The disordered stretch occupies residues 444–488; sequence GLRQDCAPSSGDAPPGAPLALTALPDPDPEPPGTPEMQAPVASRR. Low complexity predominate over residues 450–468; it reads APSSGDAPPGAPLALTALP.

This sequence belongs to the G-protein coupled receptor 1 family. Adrenergic receptor subfamily. ADRA1D sub-subfamily. Interacts with FLNA (via filamin repeat 21); increases PKA-mediated phosphorylation of FLNA. Palmitoylated. Palmitoylation by ZDHHC21 may increase the expression of the receptor and regulate downstream signaling.

The protein resides in the cell membrane. Its function is as follows. This alpha-adrenergic receptor mediates its effect through the influx of extracellular calcium. The chain is Alpha-1D adrenergic receptor (ADRA1D) from Homo sapiens (Human).